The following is a 481-amino-acid chain: tRNA-2-methylthio-N(6)-dimethylallyladenosine synthase (481 aa).

Residues 24–140 (KKLFIESYGC…LPNLLAEVEE (117 aa)) enclose the MTTase N-terminal domain. Residues C33, C69, C103, C178, C182, and C185 each contribute to the [4Fe-4S] cluster site. Residues 164-411 (MSNGITALVS…DLQQKHAWFR (248 aa)) enclose the Radical SAM core domain. The 64-residue stretch at 413–476 (EEFVGKTVEV…SGTLKGEAVG (64 aa)) folds into the TRAM domain.

Belongs to the methylthiotransferase family. MiaB subfamily. In terms of assembly, monomer. It depends on [4Fe-4S] cluster as a cofactor.

Its subcellular location is the cytoplasm. It catalyses the reaction N(6)-dimethylallyladenosine(37) in tRNA + (sulfur carrier)-SH + AH2 + 2 S-adenosyl-L-methionine = 2-methylsulfanyl-N(6)-dimethylallyladenosine(37) in tRNA + (sulfur carrier)-H + 5'-deoxyadenosine + L-methionine + A + S-adenosyl-L-homocysteine + 2 H(+). In terms of biological role, catalyzes the methylthiolation of N6-(dimethylallyl)adenosine (i(6)A), leading to the formation of 2-methylthio-N6-(dimethylallyl)adenosine (ms(2)i(6)A) at position 37 in tRNAs that read codons beginning with uridine. This is tRNA-2-methylthio-N(6)-dimethylallyladenosine synthase from Flavobacterium johnsoniae (strain ATCC 17061 / DSM 2064 / JCM 8514 / BCRC 14874 / CCUG 350202 / NBRC 14942 / NCIMB 11054 / UW101) (Cytophaga johnsonae).